A 73-amino-acid chain; its full sequence is Large ribosomal subunit protein bL31 (73 aa).

Zn(2+) is bound by residues Cys16, Cys18, Cys38, and Cys41.

This sequence belongs to the bacterial ribosomal protein bL31 family. Type A subfamily. In terms of assembly, part of the 50S ribosomal subunit. It depends on Zn(2+) as a cofactor.

Functionally, binds the 23S rRNA. In Vibrio vulnificus (strain YJ016), this protein is Large ribosomal subunit protein bL31.